Here is a 593-residue protein sequence, read N- to C-terminus: NADH-quinone oxidoreductase subunit C/D (593 aa).

The tract at residues 1 to 184 (MTADSALYIP…DPYSLSAAKQ (184 aa)) is NADH dehydrogenase I subunit C. The NADH dehydrogenase I subunit D stretch occupies residues 208–593 (DYMFLNLGPN…IDFVMADVDR (386 aa)).

The protein in the N-terminal section; belongs to the complex I 30 kDa subunit family. This sequence in the C-terminal section; belongs to the complex I 49 kDa subunit family. In terms of assembly, NDH-1 is composed of 13 different subunits. Subunits NuoB, CD, E, F, and G constitute the peripheral sector of the complex.

It is found in the cell inner membrane. It carries out the reaction a quinone + NADH + 5 H(+)(in) = a quinol + NAD(+) + 4 H(+)(out). NDH-1 shuttles electrons from NADH, via FMN and iron-sulfur (Fe-S) centers, to quinones in the respiratory chain. The immediate electron acceptor for the enzyme in this species is believed to be ubiquinone. Couples the redox reaction to proton translocation (for every two electrons transferred, four hydrogen ions are translocated across the cytoplasmic membrane), and thus conserves the redox energy in a proton gradient. The protein is NADH-quinone oxidoreductase subunit C/D of Pseudomonas aeruginosa (strain UCBPP-PA14).